Here is a 336-residue protein sequence, read N- to C-terminus: Dihydroorotate dehydrogenase (quinone) (336 aa).

FMN is bound by residues 62 to 66 and Thr-86; that span reads AGLDK. Lys-66 contributes to the substrate binding site. 111-115 provides a ligand contact to substrate; that stretch reads NRMGF. Residues Asn-139 and Asn-172 each coordinate FMN. Substrate is bound at residue Asn-172. The active-site Nucleophile is the Ser-175. Asn-177 contacts substrate. The FMN site is built by Lys-217 and Thr-245. 246-247 contacts substrate; sequence NT. FMN-binding positions include Gly-268, Gly-297, and 318–319; that span reads YS.

This sequence belongs to the dihydroorotate dehydrogenase family. Type 2 subfamily. As to quaternary structure, monomer. FMN serves as cofactor.

The protein resides in the cell membrane. It carries out the reaction (S)-dihydroorotate + a quinone = orotate + a quinol. Its pathway is pyrimidine metabolism; UMP biosynthesis via de novo pathway; orotate from (S)-dihydroorotate (quinone route): step 1/1. Its function is as follows. Catalyzes the conversion of dihydroorotate to orotate with quinone as electron acceptor. In Aeromonas hydrophila subsp. hydrophila (strain ATCC 7966 / DSM 30187 / BCRC 13018 / CCUG 14551 / JCM 1027 / KCTC 2358 / NCIMB 9240 / NCTC 8049), this protein is Dihydroorotate dehydrogenase (quinone).